The following is a 1207-amino-acid chain: DNA-directed RNA polymerase subunit beta' (1207 aa).

Zn(2+)-binding residues include Cys-60, Cys-62, Cys-75, and Cys-78. Mg(2+)-binding residues include Asp-449, Asp-451, and Asp-453. Residues Cys-822, Cys-896, Cys-903, and Cys-906 each contribute to the Zn(2+) site.

It belongs to the RNA polymerase beta' chain family. As to quaternary structure, the RNAP catalytic core consists of 2 alpha, 1 beta, 1 beta' and 1 omega subunit. When a sigma factor is associated with the core the holoenzyme is formed, which can initiate transcription. Mg(2+) is required as a cofactor. Zn(2+) serves as cofactor.

It catalyses the reaction RNA(n) + a ribonucleoside 5'-triphosphate = RNA(n+1) + diphosphate. In terms of biological role, DNA-dependent RNA polymerase catalyzes the transcription of DNA into RNA using the four ribonucleoside triphosphates as substrates. The polypeptide is DNA-directed RNA polymerase subunit beta' (Staphylococcus epidermidis (strain ATCC 35984 / DSM 28319 / BCRC 17069 / CCUG 31568 / BM 3577 / RP62A)).